Here is a 725-residue protein sequence, read N- to C-terminus: Kinesin-like protein KIF2C (725 aa).

Alanine 2 carries the post-translational modification N-acetylalanine. The tract at residues 2–254 (AMDSSLQARL…CHPLTMTDPI (253 aa)) is globular. Phosphoserine is present on residues serine 6 and serine 22. Residues 89–116 (QKQKRRSVNSKIPAPKESLRSRSTRMST) form a disordered region. Serine 95 is subject to Phosphoserine; by AURKB. The Microtubule tip localization signal signature appears at 98–101 (SKIP). Residues serine 106, serine 109, serine 111, serine 115, serine 166, serine 175, serine 187, and serine 192 each carry the phosphoserine modification. The interval 207–238 (EKKAQNSEMRMKRAQEYDSSFPNWEFARMIKE) is negative regulator of microtubule-binding. Residues 258 to 588 (RICVCVRKRP…LRYADRVKEL (331 aa)) form the Kinesin motor domain. Residues arginine 264 and 348–355 (GQTGSGKT) contribute to the ATP site. The Nuclear localization signal motif lies at 415 to 418 (KKAK). Residues serine 519, serine 621, and serine 633 each carry the phosphoserine modification. Residues 618-658 (GNLSKEEEELSSQMSSFNEAMTQIRELEEKAMEELKEIIQQ) adopt a coiled-coil conformation.

This sequence belongs to the TRAFAC class myosin-kinesin ATPase superfamily. Kinesin family. MCAK/KIF2 subfamily. As to quaternary structure, interacts with CENPH. Interacts with MTUS2/TIP150; the interaction is direct. Interacts with MAPRE1; the interaction is direct, regulated by phosphorylation and is probably required for targeting to growing microtubule plus ends. Interacts with KIF18B at microtubule tips; this interaction increases the affinity of both partners for microtubule plus ends and is required for robust microtubule depolymerization. Phosphorylation by AURKA or AURKB strongly reduces KIF18B-binding. Phosphorylation by AURKB, regulates association with centromeres and kinetochores and the microtubule depolymerization activity. In terms of processing, ubiquitinated. As to expression, expressed at high levels in thymus and testis, at low levels in small intestine, the mucosal lining of colon, and placenta, and at very low levels in spleen and ovary; expression is not detected in prostate, peripheral blood Leukocytes, heart, brain, lung, liver, skeletal muscle, kidney or pancreas. Isoform 2 is testis-specific.

It is found in the cytoplasm. It localises to the cytoskeleton. Its subcellular location is the nucleus. The protein localises to the chromosome. The protein resides in the centromere. It is found in the kinetochore. In terms of biological role, in complex with KIF18B, constitutes the major microtubule plus-end depolymerizing activity in mitotic cells. Regulates the turnover of microtubules at the kinetochore and functions in chromosome segregation during mitosis. Plays a role in chromosome congression and is required for the lateral to end-on conversion of the chromosome-microtubule attachment. This Homo sapiens (Human) protein is Kinesin-like protein KIF2C (KIF2C).